Reading from the N-terminus, the 197-residue chain is Potassium-transporting ATPase KdpC subunit (197 aa).

The helical transmembrane segment at 7 to 27 threads the bilayer; it reads PALVSMGLFTVLLGLAYPLAV.

Belongs to the KdpC family. The system is composed of three essential subunits: KdpA, KdpB and KdpC.

Its subcellular location is the cell inner membrane. Part of the high-affinity ATP-driven potassium transport (or Kdp) system, which catalyzes the hydrolysis of ATP coupled with the electrogenic transport of potassium into the cytoplasm. This subunit acts as a catalytic chaperone that increases the ATP-binding affinity of the ATP-hydrolyzing subunit KdpB by the formation of a transient KdpB/KdpC/ATP ternary complex. This Caulobacter vibrioides (strain ATCC 19089 / CIP 103742 / CB 15) (Caulobacter crescentus) protein is Potassium-transporting ATPase KdpC subunit.